The primary structure comprises 420 residues: Probable protein phosphatase 2C 76 (420 aa).

The 247-residue stretch at 101–347 (SCGYCSFRGK…DNITCIVVKF (247 aa)) folds into the PPM-type phosphatase domain. Residues Asp-137, Gly-138, Asp-299, and Asp-338 each coordinate Mn(2+). Residues 353 to 420 (ESPKIETNAM…PETKGEKAGE (68 aa)) form a disordered region. The segment covering 403 to 420 (PDPKPETEPETKGEKAGE) has biased composition (basic and acidic residues).

The protein belongs to the PP2C family. The cofactor is Mg(2+). Mn(2+) serves as cofactor.

It carries out the reaction O-phospho-L-seryl-[protein] + H2O = L-seryl-[protein] + phosphate. The enzyme catalyses O-phospho-L-threonyl-[protein] + H2O = L-threonyl-[protein] + phosphate. In Arabidopsis thaliana (Mouse-ear cress), this protein is Probable protein phosphatase 2C 76.